A 427-amino-acid chain; its full sequence is Serine--tRNA ligase (427 aa).

231–233 serves as a coordination point for L-serine; sequence TAE. An ATP-binding site is contributed by 262-264; that stretch reads RSE. Residue E285 coordinates L-serine. 349 to 352 contributes to the ATP binding site; the sequence is EISS. Residue S385 coordinates L-serine.

The protein belongs to the class-II aminoacyl-tRNA synthetase family. Type-1 seryl-tRNA synthetase subfamily. In terms of assembly, homodimer. The tRNA molecule binds across the dimer.

It is found in the cytoplasm. It catalyses the reaction tRNA(Ser) + L-serine + ATP = L-seryl-tRNA(Ser) + AMP + diphosphate + H(+). It carries out the reaction tRNA(Sec) + L-serine + ATP = L-seryl-tRNA(Sec) + AMP + diphosphate + H(+). Its pathway is aminoacyl-tRNA biosynthesis; selenocysteinyl-tRNA(Sec) biosynthesis; L-seryl-tRNA(Sec) from L-serine and tRNA(Sec): step 1/1. In terms of biological role, catalyzes the attachment of serine to tRNA(Ser). Is also able to aminoacylate tRNA(Sec) with serine, to form the misacylated tRNA L-seryl-tRNA(Sec), which will be further converted into selenocysteinyl-tRNA(Sec). This chain is Serine--tRNA ligase, found in Allorhizobium ampelinum (strain ATCC BAA-846 / DSM 112012 / S4) (Agrobacterium vitis (strain S4)).